The chain runs to 579 residues: Proteasome-associated ATPase (579 aa).

The tract at residues 1-21 (MPRDETPEREHAEQQSRQALE) is disordered. Residues 8 to 86 (EREHAEQQSR…REEVEKLTQP (79 aa)) are a coiled coil. 268-273 (GCGKTL) is an ATP binding site. The segment at 578-579 (YL) is docks into pockets in the proteasome alpha-ring.

Belongs to the AAA ATPase family. Homohexamer. Assembles into a hexameric ring structure that caps the 20S proteasome core. Strongly interacts with the prokaryotic ubiquitin-like protein Pup through a hydrophobic interface; the interacting region of ARC lies in its N-terminal coiled-coil domain. There is one Pup binding site per ARC hexamer ring. Upon ATP-binding, the C-terminus of ARC interacts with the alpha-rings of the proteasome core, possibly by binding to the intersubunit pockets.

It participates in protein degradation; proteasomal Pup-dependent pathway. Functionally, ATPase which is responsible for recognizing, binding, unfolding and translocation of pupylated proteins into the bacterial 20S proteasome core particle. May be essential for opening the gate of the 20S proteasome via an interaction with its C-terminus, thereby allowing substrate entry and access to the site of proteolysis. Thus, the C-termini of the proteasomal ATPase may function like a 'key in a lock' to induce gate opening and therefore regulate proteolysis. This Acidimicrobium ferrooxidans (strain DSM 10331 / JCM 15462 / NBRC 103882 / ICP) protein is Proteasome-associated ATPase.